The sequence spans 1584 residues: MEDDGSLLPEDELLADALLLEDERDELEDPEFDIKCLLQEAEDDVDPGHSSSVKELDTDADKLKKKTAEDRTQAFHLRQNLSALDKMHEEQELFTEKMRGELRACRQRRDLIDKQQEAVAAEIATEEEAGNMAAVGRLQAVSRRLFAELENERDLQSRTEAVLKESENTMWHIEIQEGRLEAFRTADREEVEATGRRLQVRAAEQLCREQEALGKVERNRLLRIRKSLNTQKELGLRHQKLLEDARKNHKVAVRFLKASLGRIREQEKKEEMECHEYMRRRMDAVVALKGSISANRDTLRKFQAWDRAKAELAEQRVQAEKKAILAQGRDAFRHLVHQRRRQELEAQKRAFEEEQKLRKQEIISRILKEEAEEEKRKKQHPPTSARHRLTLRDKTWNYISDFCKKTTVPTNTYTLDYEAAAGPGPSRLLEVVSSELIQGDPGASSEEETLAEPEISGLWNEDYKPYQVPKEDVDRKPVGGTKMDKDILERTVERLRSRVVHKQVVWGREFQGRPFNSKPELLHFQDFDIGKVYKKKITLVNTTYTINYCKLVGVEEHLRDFIHVDFDPPGPLSAGMSCEVLVTFKPMINKDLEGNISFLAQTGEFSVPLKCSTKKCSLSLDKELIDFGSYVVGETTSRTITLTNVGGLGTTFKFLPASEPCEMDDSQSALKLSSLLTYEDKSLYDKAATSFSEQQLEGTESSQADMQSRKELEKLDKEQEEEQPAEPERLTTVIPPSEEQTEITLGEVTEGEIGPFSSIKVPIVFTPVVPGDVQARFKVTFKNPQCPTLHFRVVGVAIDVPVWVPKPSVDLKICMYDRLYQDSVLVHTRSKAALRLKFEVCKELRAHLELLPKTGYIQAQSSYSVQLKFLPRHSLPEDAGRYFDKETRVLEAPMTIWVADQNKPVGFTVHAIVTTSDLELSPSEVDFGYCTIYEAIRTEISLHNHSLLPQEFGFVRLPKFVDVQPNDGFGTILPLETLQFCVIFQPTKAEEHRFQLTCKSEINRCFKLSCRAVGVHPPLELSHYQIKFAATALYDTSVATVYVINSHLSMSSPTHSKPRIGSEDASPMGPTSFEFLLPPDSPITISPSVGTVWPGKRCLVQVAFRPVLPEKLIRQEALPLLNKEMETKSFRKNMAPQRKDLHGLSFSVLRAQNRDKLFKVSVPHVLEMRKRELRPSSDEYQAARATLLRAFQAKFDTFVVPCVVASGDIKDRKGSEPLSFSPHNTLYLELWCPTVAPSVVVTSHKGKTIFNFGDVAVGHRSIKKISIQNVSPEDLALDFSLLNPNGPFVLLNHSSLLRAGGTQVLVLSFSPHESILAQETLDIITKRGTLTLTLMGTGVASMITCSIEGSVLNMGYVIAGESVSSGFKLQNNSLLPIKFSMHLDSLSSTRGRGQQQLPQFLSSPSQRTEVVGTQNLNGQSVFSVAPVKGVMDPGKTQDFTVTFSPDHESLYFSDKLQVVLFEKKISHQILLKGAACQHMMFVEGGDPLDVPVESLTAIPVFDPRHREEAEELRPILVTLDYIQFDTDTPAPPATRELQVGCIRTTQPSPKKPDHPLMVSALLQLRGDVKETYKVIFVAQVLTGP.

A coiled-coil region spans residues 300–379 (RKFQAWDRAK…EAEEEKRKKQ (80 aa)). Residues 692-706 (SEQQLEGTESSQADM) are compositionally biased toward polar residues. Residues 692-739 (SEQQLEGTESSQADMQSRKELEKLDKEQEEEQPAEPERLTTVIPPSEE) are disordered. Residues 707–717 (QSRKELEKLDK) are compositionally biased toward basic and acidic residues.

This sequence belongs to the CFAP74 family.

The protein resides in the cytoplasm. It localises to the cytoskeleton. It is found in the cilium axoneme. The protein localises to the flagellum axoneme. Functionally, as part of the central apparatus of the cilium axoneme may play a role in cilium movement. May play an important role in sperm architecture and function. This Homo sapiens (Human) protein is Cilia- and flagella-associated protein 74.